Reading from the N-terminus, the 60-residue chain is Putative mercuric resistance protein (60 aa).

The chain is Putative mercuric resistance protein from Pseudomonas aeruginosa.